A 643-amino-acid polypeptide reads, in one-letter code: UvrABC system protein C (643 aa).

The GIY-YIG domain occupies 25-104 (AEPGVYFMRD…IKQHQPHFNV (80 aa)). A UVR domain is found at 214–249 (SELVELLEAQMLQAAENLEFEKAAKIRDQIRGLEGL).

This sequence belongs to the UvrC family. As to quaternary structure, interacts with UvrB in an incision complex.

The protein localises to the cytoplasm. Functionally, the UvrABC repair system catalyzes the recognition and processing of DNA lesions. UvrC both incises the 5' and 3' sides of the lesion. The N-terminal half is responsible for the 3' incision and the C-terminal half is responsible for the 5' incision. This is UvrABC system protein C from Synechococcus elongatus (strain ATCC 33912 / PCC 7942 / FACHB-805) (Anacystis nidulans R2).